The following is a 118-amino-acid chain: Large ribosomal subunit protein bL20 (118 aa).

It belongs to the bacterial ribosomal protein bL20 family.

Functionally, binds directly to 23S ribosomal RNA and is necessary for the in vitro assembly process of the 50S ribosomal subunit. It is not involved in the protein synthesizing functions of that subunit. This chain is Large ribosomal subunit protein bL20, found in Clostridioides difficile (strain 630) (Peptoclostridium difficile).